Here is a 219-residue protein sequence, read N- to C-terminus: Glycerol-3-phosphate acyltransferase 2 (219 aa).

5 consecutive transmembrane segments (helical) span residues 1–21 (MVFWIAGAVGLAIAYLLGSTP), 55–75 (WPALVVLLVDVLKGVGAVVFA), 93–113 (ALDLQSLEPWAVCLTGLAVLL), 135–155 (VLLAMSWPVGLGAAMVFGVAL), and 160–180 (IVSLSSMLAALTAIALVCGLE).

This sequence belongs to the PlsY family. In terms of assembly, probably interacts with PlsX.

Its subcellular location is the cell inner membrane. The catalysed reaction is an acyl phosphate + sn-glycerol 3-phosphate = a 1-acyl-sn-glycero-3-phosphate + phosphate. Its pathway is lipid metabolism; phospholipid metabolism. Its function is as follows. Catalyzes the transfer of an acyl group from acyl-phosphate (acyl-PO(4)) to glycerol-3-phosphate (G3P) to form lysophosphatidic acid (LPA). This enzyme utilizes acyl-phosphate as fatty acyl donor, but not acyl-CoA or acyl-ACP. The sequence is that of Glycerol-3-phosphate acyltransferase 2 from Rhizobium johnstonii (strain DSM 114642 / LMG 32736 / 3841) (Rhizobium leguminosarum bv. viciae).